We begin with the raw amino-acid sequence, 69 residues long: MFPKLGMGELVVILLIVVILFGASKLPQLGAGLGQGIRSFKKSFSGEDEEKPSTPGATSSDEASKAKQA.

The chain crosses the membrane as a helical span at residues 1–21 (MFPKLGMGELVVILLIVVILF). The disordered stretch occupies residues 43–69 (SFSGEDEEKPSTPGATSSDEASKAKQA).

This sequence belongs to the TatA/E family. In terms of assembly, the Tat system comprises two distinct complexes: a TatABC complex, containing multiple copies of TatA, TatB and TatC subunits, and a separate TatA complex, containing only TatA subunits. Substrates initially bind to the TatABC complex, which probably triggers association of the separate TatA complex to form the active translocon.

It localises to the cell inner membrane. Functionally, part of the twin-arginine translocation (Tat) system that transports large folded proteins containing a characteristic twin-arginine motif in their signal peptide across membranes. TatA could form the protein-conducting channel of the Tat system. The protein is Sec-independent protein translocase protein TatA of Anaeromyxobacter sp. (strain Fw109-5).